The sequence spans 88 residues: Apolipoprotein C-I (88 aa).

Residues 1 to 26 (MRLFLSLPVLVVVLAMVLEGPAPAQA) form the signal peptide.

This sequence belongs to the apolipoprotein C1 family.

It localises to the secreted. In terms of biological role, inhibitor of lipoprotein binding to the low density lipoprotein (LDL) receptor, LDL receptor-related protein, and very low density lipoprotein (VLDL) receptor. Associates with high density lipoproteins (HDL) and the triacylglycerol-rich lipoproteins in the plasma and makes up about 10% of the protein of the VLDL and 2% of that of HDL. Appears to interfere directly with fatty acid uptake and is also the major plasma inhibitor of cholesteryl ester transfer protein (CETP). Binds free fatty acids and reduces their intracellular esterification. Modulates the interaction of APOE with beta-migrating VLDL and inhibits binding of beta-VLDL to the LDL receptor-related protein. The protein is Apolipoprotein C-I (APOC1) of Arctocephalus gazella (Antarctic fur seal).